We begin with the raw amino-acid sequence, 289 residues long: Diaminopimelate epimerase (289 aa).

Positions 15 and 76 each coordinate substrate. The Proton donor role is filled by C85. Substrate is bound by residues 86–87 (GN), N158, N191, and 209–210 (ER). The active-site Proton acceptor is C218. Position 219-220 (219-220 (GT)) interacts with substrate.

Belongs to the diaminopimelate epimerase family. In terms of assembly, homodimer.

The protein localises to the cytoplasm. The catalysed reaction is (2S,6S)-2,6-diaminopimelate = meso-2,6-diaminopimelate. Its pathway is amino-acid biosynthesis; L-lysine biosynthesis via DAP pathway; DL-2,6-diaminopimelate from LL-2,6-diaminopimelate: step 1/1. In terms of biological role, catalyzes the stereoinversion of LL-2,6-diaminopimelate (L,L-DAP) to meso-diaminopimelate (meso-DAP), a precursor of L-lysine and an essential component of the bacterial peptidoglycan. This is Diaminopimelate epimerase from Streptomyces coelicolor (strain ATCC BAA-471 / A3(2) / M145).